The following is a 274-amino-acid chain: NH(3)-dependent NAD(+) synthetase (274 aa).

Residue 46 to 53 (GISGGQDS) coordinates ATP. Asp52 is a Mg(2+) binding site. Arg140 provides a ligand contact to deamido-NAD(+). Thr160 provides a ligand contact to ATP. Glu165 is a binding site for Mg(2+). Positions 173 and 180 each coordinate deamido-NAD(+). Lys189 and Thr211 together coordinate ATP. 260-261 (HK) contacts deamido-NAD(+).

It belongs to the NAD synthetase family. Homodimer.

The enzyme catalyses deamido-NAD(+) + NH4(+) + ATP = AMP + diphosphate + NAD(+) + H(+). It participates in cofactor biosynthesis; NAD(+) biosynthesis; NAD(+) from deamido-NAD(+) (ammonia route): step 1/1. Catalyzes the ATP-dependent amidation of deamido-NAD to form NAD. Uses ammonia as a nitrogen source. The chain is NH(3)-dependent NAD(+) synthetase from Streptococcus suis (strain 05ZYH33).